We begin with the raw amino-acid sequence, 260 residues long: 14-3-3-like protein C (260 aa).

Belongs to the 14-3-3 family.

In Nicotiana tabacum (Common tobacco), this protein is 14-3-3-like protein C.